Reading from the N-terminus, the 551-residue chain is uncharacterized protein (551 aa).

The protein belongs to the GSP E family.

This is an uncharacterized protein from Methanocaldococcus jannaschii (strain ATCC 43067 / DSM 2661 / JAL-1 / JCM 10045 / NBRC 100440) (Methanococcus jannaschii).